Here is a 187-residue protein sequence, read N- to C-terminus: Shikimate kinase (187 aa).

14–19 (GSGKST) provides a ligand contact to ATP. Ser-18 is a Mg(2+) binding site. Residues Asp-36, Arg-60, and Gly-82 each coordinate substrate. Arg-120 is a binding site for ATP. A substrate-binding site is contributed by Arg-147.

It belongs to the shikimate kinase family. As to quaternary structure, monomer. Requires Mg(2+) as cofactor.

The protein localises to the cytoplasm. It carries out the reaction shikimate + ATP = 3-phosphoshikimate + ADP + H(+). The protein operates within metabolic intermediate biosynthesis; chorismate biosynthesis; chorismate from D-erythrose 4-phosphate and phosphoenolpyruvate: step 5/7. Functionally, catalyzes the specific phosphorylation of the 3-hydroxyl group of shikimic acid using ATP as a cosubstrate. The polypeptide is Shikimate kinase (Chlorobaculum parvum (strain DSM 263 / NCIMB 8327) (Chlorobium vibrioforme subsp. thiosulfatophilum)).